Consider the following 213-residue polypeptide: Thymidylate kinase (213 aa).

G10–T17 serves as a coordination point for ATP.

It belongs to the thymidylate kinase family.

It carries out the reaction dTMP + ATP = dTDP + ADP. Phosphorylation of dTMP to form dTDP in both de novo and salvage pathways of dTTP synthesis. The chain is Thymidylate kinase from Escherichia fergusonii (strain ATCC 35469 / DSM 13698 / CCUG 18766 / IAM 14443 / JCM 21226 / LMG 7866 / NBRC 102419 / NCTC 12128 / CDC 0568-73).